We begin with the raw amino-acid sequence, 100 residues long: Large ribosomal subunit protein uL23 (100 aa).

Belongs to the universal ribosomal protein uL23 family. In terms of assembly, part of the 50S ribosomal subunit. Contacts protein L29, and trigger factor when it is bound to the ribosome.

One of the early assembly proteins it binds 23S rRNA. One of the proteins that surrounds the polypeptide exit tunnel on the outside of the ribosome. Forms the main docking site for trigger factor binding to the ribosome. In Synechococcus sp. (strain RCC307), this protein is Large ribosomal subunit protein uL23.